Consider the following 232-residue polypeptide: Ribonuclease 3 (232 aa).

An RNase III domain is found at 5 to 134; sequence QTVLKNHFAI…FLGALLLDKD (130 aa). Glu-47 lines the Mg(2+) pocket. The active site involves Asp-51. Mg(2+) contacts are provided by Asp-120 and Glu-123. The active site involves Glu-123. One can recognise a DRBM domain in the interval 160–229; sequence DYKTHLQELL…AKNAVEKGLD (70 aa).

Belongs to the ribonuclease III family. In terms of assembly, homodimer. Mg(2+) serves as cofactor.

The protein resides in the cytoplasm. It carries out the reaction Endonucleolytic cleavage to 5'-phosphomonoester.. In terms of biological role, digests double-stranded RNA. Involved in the processing of primary rRNA transcript to yield the immediate precursors to the large and small rRNAs (23S and 16S). Processes some mRNAs, and tRNAs when they are encoded in the rRNA operon. Processes pre-crRNA and tracrRNA of type II CRISPR loci if present in the organism. In Streptococcus pneumoniae (strain Hungary19A-6), this protein is Ribonuclease 3.